Reading from the N-terminus, the 783-residue chain is Tripartite motif-containing protein 67 (783 aa).

The RING-type; degenerate zinc finger occupies 7–42 (CPVCGSLFREPIILPCSHNVCLPCARTIAVQTPDGE). Residues 206-253 (AICQLCDRTPPEPAATLCEQCDVLYCSACQLKCHPSRGPFAKHRLVQP) form a B box-type 1; degenerate zinc finger. Positions 247-295 (KHRLVQPPPPPPPPAEAASGPTGTAQGAPSGGGGCKSPGGAGAGATGGS) are disordered. A compositionally biased stretch (pro residues) spans 252-261 (QPPPPPPPPA). Gly residues predominate over residues 275–293 (PSGGGGCKSPGGAGAGATG). A B box-type 2 zinc finger spans residues 298-340 (RKFPTCPEHEMENYSMYCVSCRTPVCYLCLEEGRHAKHEVKPL). Cys303, His306, Cys326, and His332 together coordinate Zn(2+). Positions 345-382 (KQHKAQLSQALNGVSDKAKEAKEFLVQLKNILQQIQEN) form a coiled coil. One can recognise a COS domain in the interval 448–506 (IKENDPSGFLQISDALIKRVQVSQEQWVKGALEPKVSAEFDLTLDSEPLLQAIHQLDFI). The Fibronectin type-III domain maps to 513-607 (PPVPLLQLEK…KTVVLQTSDV (95 aa)). One can recognise a B30.2/SPRY domain in the interval 589–780 (NSSGVGPYSK…VPTNLGRPKL (192 aa)).

This sequence belongs to the TRIM/RBCC family.

It localises to the cytoplasm. The protein localises to the cytoskeleton. The polypeptide is Tripartite motif-containing protein 67 (TRIM67) (Homo sapiens (Human)).